A 1069-amino-acid chain; its full sequence is Carbamoyl phosphate synthase large chain (1069 aa).

Positions Met1 to Glu401 are carboxyphosphate synthetic domain. ATP is bound by residues Arg129, Arg169, Gly175, Gly176, Lys208, Val210, Glu215, Gly241, Ile242, His243, Gln284, and Glu298. Positions Arg133–Leu327 constitute an ATP-grasp 1 domain. Residues Gln284, Glu298, and Asn300 each contribute to the Mg(2+) site. Gln284, Glu298, and Asn300 together coordinate Mn(2+). Residues Ile402–Val549 are oligomerization domain. The tract at residues Glu550–Tyr932 is carbamoyl phosphate synthetic domain. Residues Asp674 to Leu864 form the ATP-grasp 2 domain. Residues Arg710, Lys749, Leu751, Glu755, Gly780, Val781, His782, Ser783, Gln823, and Glu835 each contribute to the ATP site. Mg(2+)-binding residues include Gln823, Glu835, and Asn837. Mn(2+) contacts are provided by Gln823, Glu835, and Asn837. One can recognise an MGS-like domain in the interval Tyr932 to Lys1069. The tract at residues Met933–Lys1069 is allosteric domain.

The protein belongs to the CarB family. Composed of two chains; the small (or glutamine) chain promotes the hydrolysis of glutamine to ammonia, which is used by the large (or ammonia) chain to synthesize carbamoyl phosphate. Tetramer of heterodimers (alpha,beta)4. Mg(2+) is required as a cofactor. It depends on Mn(2+) as a cofactor.

It carries out the reaction hydrogencarbonate + L-glutamine + 2 ATP + H2O = carbamoyl phosphate + L-glutamate + 2 ADP + phosphate + 2 H(+). It catalyses the reaction hydrogencarbonate + NH4(+) + 2 ATP = carbamoyl phosphate + 2 ADP + phosphate + 2 H(+). Its pathway is amino-acid biosynthesis; L-arginine biosynthesis; carbamoyl phosphate from bicarbonate: step 1/1. The protein operates within pyrimidine metabolism; UMP biosynthesis via de novo pathway; (S)-dihydroorotate from bicarbonate: step 1/3. Functionally, large subunit of the glutamine-dependent carbamoyl phosphate synthetase (CPSase). CPSase catalyzes the formation of carbamoyl phosphate from the ammonia moiety of glutamine, carbonate, and phosphate donated by ATP, constituting the first step of 2 biosynthetic pathways, one leading to arginine and/or urea and the other to pyrimidine nucleotides. The large subunit (synthetase) binds the substrates ammonia (free or transferred from glutamine from the small subunit), hydrogencarbonate and ATP and carries out an ATP-coupled ligase reaction, activating hydrogencarbonate by forming carboxy phosphate which reacts with ammonia to form carbamoyl phosphate. The chain is Carbamoyl phosphate synthase large chain from Clostridium beijerinckii (strain ATCC 51743 / NCIMB 8052) (Clostridium acetobutylicum).